A 118-amino-acid chain; its full sequence is Iron-sulfur cluster assembly protein CyaY (118 aa).

The protein belongs to the frataxin family.

Involved in iron-sulfur (Fe-S) cluster assembly. May act as a regulator of Fe-S biogenesis. This chain is Iron-sulfur cluster assembly protein CyaY, found in Buchnera aphidicola subsp. Baizongia pistaciae (strain Bp).